We begin with the raw amino-acid sequence, 499 residues long: Glucose-6-phosphate exchanger SLC37A2 (499 aa).

The chain crosses the membrane as a helical span at residues 21–40; sequence YRGFIIVMTFLFYTCYHMSR. 3 N-linked (GlcNAc...) asparagine glycosylation sites follow: Asn-53, Asn-62, and Asn-66. The next 11 helical transmembrane spans lie at 86–106, 116–136, 138–158, 187–207, 208–228, 302–322, 334–354, 362–382, 391–411, 434–454, and 458–478; these read GSLD…SGIF, LSGG…GYYW, IHAL…QTTG, AVGN…AWGL, SFIV…FFLV, LCLL…PLYI, GDLS…AGGI, AITC…YNYL, VAML…ITTA, AIID…AGVL, and GWNY…LLLV.

It belongs to the major facilitator superfamily. Organophosphate:Pi antiporter (OPA) (TC 2.A.1.4) family.

The protein resides in the endoplasmic reticulum membrane. The enzyme catalyses D-glucose 6-phosphate(in) + phosphate(out) = D-glucose 6-phosphate(out) + phosphate(in). In terms of biological role, inorganic phosphate and glucose-6-phosphate antiporter. May transport cytoplasmic glucose-6-phosphate into the lumen of the endoplasmic reticulum and translocate inorganic phosphate into the opposite direction. This is Glucose-6-phosphate exchanger SLC37A2 from Xenopus tropicalis (Western clawed frog).